The following is a 570-amino-acid chain: MAKYVIGSAWPYVQTVPHLGNMIGSVLSADVYARYLRLRGHDVVFVSGSDMHGTPIEVEAIQLGVDPAEYAFKMHGVVAELFKRWNISFDLYTHTHSETHVAFVQEFFKRIYENGYIFTKDEEMPYCPRDKIFLPDRFIIGKCPYCGYERARGDQCENCGRLLDPKQLVEPRCAVCGSKPEWRLTRHWYLDLRRLEDKIRKYVEENPHLPQNAKEMSLAMLKEGLKPRAVTRDNKWGIPAPFPGAEGKTIYVWFEAVLGYISAVVEHFKRLGKESEWEKYWRDPDTKIIFFVGKDNIPFHVIILPALLLANGGGYTLPTTTASTEYLLYEGDKFSKSRRWGIWIDEALHLLPADYWRFILVYIRPENRDTSFTWAQALEIVNKVLNDDVGNYVNRVLSFIKSRMGGVVPPPGTPQEEDKSFLQAALQLFKKAERHYEAVELKDALHTVVEIAREGNRYLNARAPWDLLKTRPEEANAVMYHAYWSLKMLAAGLAPVIPESVEKMWEMMGRPASLTWDEALREPAPGVKLGEVKPLFRKVGEDEVKKMLQALEQMKREKASKKYPWEQALL.

Positions 11–21 (PYVQTVPHLGN) match the 'HIGH' region motif. The Zn(2+) site is built by Cys143, Cys146, Cys156, and Cys159. Residues 333–337 (KFSKS) carry the 'KMSKS' region motif. Residue Lys336 participates in ATP binding.

Belongs to the class-I aminoacyl-tRNA synthetase family. MetG type 1 subfamily. Zn(2+) is required as a cofactor.

Its subcellular location is the cytoplasm. It catalyses the reaction tRNA(Met) + L-methionine + ATP = L-methionyl-tRNA(Met) + AMP + diphosphate. Functionally, is required not only for elongation of protein synthesis but also for the initiation of all mRNA translation through initiator tRNA(fMet) aminoacylation. This chain is Methionine--tRNA ligase, found in Pyrobaculum calidifontis (strain DSM 21063 / JCM 11548 / VA1).